Reading from the N-terminus, the 398-residue chain is Succinate--CoA ligase [ADP-forming] subunit beta (398 aa).

In terms of domain architecture, ATP-grasp spans 9–254 (KALLHEFGVP…ETEEDAKEIE (246 aa)). Residues K46, 53-55 (GRG), E109, S112, and E117 contribute to the ATP site. Mg(2+)-binding residues include N209 and D223. Substrate contacts are provided by residues N274 and 331-333 (GIM).

Belongs to the succinate/malate CoA ligase beta subunit family. In terms of assembly, heterotetramer of two alpha and two beta subunits. Requires Mg(2+) as cofactor.

It carries out the reaction succinate + ATP + CoA = succinyl-CoA + ADP + phosphate. It catalyses the reaction GTP + succinate + CoA = succinyl-CoA + GDP + phosphate. Its pathway is carbohydrate metabolism; tricarboxylic acid cycle; succinate from succinyl-CoA (ligase route): step 1/1. Its function is as follows. Succinyl-CoA synthetase functions in the citric acid cycle (TCA), coupling the hydrolysis of succinyl-CoA to the synthesis of either ATP or GTP and thus represents the only step of substrate-level phosphorylation in the TCA. The beta subunit provides nucleotide specificity of the enzyme and binds the substrate succinate, while the binding sites for coenzyme A and phosphate are found in the alpha subunit. In Bradyrhizobium sp. (strain ORS 278), this protein is Succinate--CoA ligase [ADP-forming] subunit beta.